A 456-amino-acid polypeptide reads, in one-letter code: MPPGPWESCFWVGGLLLWLSVGSSGDAPPTPQPNCADFQSANLFEGTDLKVQFLLFVPSNPSCGQLVEGSSDLQNSGFNATLGTKLIIHGFRVLGTKPSWIDKFIRTLLLATNANVIAVDWIYGSTGVYFSAVKNVIKLSLEISLFLNKLLVLGVSESSIHIIGVSLGAHVGGMVGQLFGGQLGQITGLDPAGPEYTRASVEERLDAGDALFVEAIHTDTDNLGIRIPVGHVDYFVNGGQDQPGCPTFFYAGYSYLICDHMRAVHLYISALENSCPLMAFPCASYKAFLAGRCLDCFNPFLLSCPRIGLVEQGGVKIEPLPKEVKVYLLTTSSAPYCMHHSLVEFHLKELRNKDTNIEVTFLSSNVTSSSKITIPKQQRYGKGIIAHATPQCQINQVKFKFQSSNRVWKKDRTTIIGKFCTALLPVNDREKMVCLPEPVNLQASVTVSRDLNLACV.

The first 25 residues, 1–25 (MPPGPWESCFWVGGLLLWLSVGSSG), serve as a signal peptide directing secretion. S166 functions as the Nucleophile in the catalytic mechanism. D190 functions as the Charge relay system in the catalytic mechanism. Cysteines 245 and 258 form a disulfide. The Charge relay system role is filled by H260. 2 disulfide bridges follow: C282/C293 and C296/C304. A glycan (N-linked (GlcNAc...) asparagine) is linked at N365.

It belongs to the AB hydrolase superfamily. Lipase family.

The protein localises to the secreted. It catalyses the reaction a 1,2-diacyl-sn-glycero-3-phospho-L-serine + H2O = a 2-acyl-sn-glycero-3-phospho-L-serine + a fatty acid + H(+). It carries out the reaction 1,2-di-(9Z)-octadecenoyl-sn-glycero-3-phospho-L-serine + H2O = 2-(9Z-octadecenoyl)-sn-glycero-3-phospho-L-serine + (9Z)-octadecenoate + H(+). The enzyme catalyses 1-hexadecanoyl-2-(5Z,8Z,11Z,14Z-eicosatetraenoyl)-sn-glycero-3-phospho-L-serine + H2O = 2-(5Z,8Z,11Z,14Z)-eicosatetraenoyl-sn-glycero-3-phospho-L-serine + hexadecanoate + H(+). The catalysed reaction is a 1-acyl-sn-glycero-3-phospho-L-serine + H2O = sn-glycero-3-phospho-L-serine + a fatty acid + H(+). It catalyses the reaction 1-(9Z-octadecenoyl)-sn-glycero-3-phospho-L-serine + H2O = sn-glycero-3-phospho-L-serine + (9Z)-octadecenoate + H(+). Functionally, hydrolyzes the ester bond of the acyl group attached at the sn-1 position of phosphatidylserines (phospholipase A1 activity) and 1-acyl-2-lysophosphatidylserines (lysophospholipase activity) in the pathway of phosphatidylserines acyl chain remodeling. Cleaves phosphatidylserines exposed on the outer leaflet of the plasma membrane of apoptotic cells producing 2-acyl-1-lysophosphatidylserines, which in turn enhance mast cell activation and histamine production. Has no activity toward other glycerophospholipids including phosphatidylcholines, phosphatidylethanolamines, phosphatidic acids or phosphatidylinositols, or glycerolipids such as triolein. This is Phospholipase A1 member A (PLA1A) from Pongo abelii (Sumatran orangutan).